The sequence spans 391 residues: Multidrug resistance protein MdtL (391 aa).

At 1-3 the chain is on the cytoplasmic side; that stretch reads MSR. Residues 4-24 form a helical membrane-spanning segment; it reads FLICSFALVLLYPAGIDMYLV. Residues 25–41 lie on the Periplasmic side of the membrane; sequence GLPRIAADLNASEAQLH. Residues 42 to 62 traverse the membrane as a helical segment; that stretch reads IAFSVYLAGMAAAMLFAGKVA. Residues 63 to 68 are Cytoplasmic-facing; sequence DRSGRK. Residues 69 to 89 traverse the membrane as a helical segment; the sequence is PVAIPGAALFIIASVFCSLAE. The Periplasmic portion of the chain corresponds to 90–92; that stretch reads TSA. Residues 93-113 form a helical membrane-spanning segment; that stretch reads LFLAGRFLQGLGAGCCYVVAF. The Cytoplasmic portion of the chain corresponds to 114–130; it reads AILRDTLDDRRRAKVLS. A helical membrane pass occupies residues 131-151; the sequence is LLNGITCIIPVLAPVLGHLIM. Over 152–157 the chain is Periplasmic; sequence LKFPWQ. Residues 158–178 form a helical membrane-spanning segment; it reads SLFWTMATMGIAVLMLSLFIL. At 179–202 the chain is on the cytoplasmic side; sequence KETRPAAPAASDKPRENSESLLNR. A helical membrane pass occupies residues 203-222; it reads FFLSRVVITTLSVSVILTFV. The Periplasmic segment spans residues 223 to 244; the sequence is NTSPVLLMEIMGFERGEYATIM. A helical transmembrane segment spans residues 245-265; that stretch reads ALTAGVSMTVSFSTPFALGIF. At 266–268 the chain is on the cytoplasmic side; the sequence is KPR. A helical transmembrane segment spans residues 269–289; that stretch reads TLMITSQVLFLAAGITLAVSP. Residues 290–292 lie on the Periplasmic side of the membrane; it reads SHA. Residues 293–313 form a helical membrane-spanning segment; it reads VSLFGITLICAGFSVGFGVAM. The Cytoplasmic portion of the chain corresponds to 314 to 330; sequence SQALGPFSLRAGVASST. The helical transmembrane segment at 331–351 threads the bilayer; the sequence is LGIAQVCGSSLWIWLAAVVGI. Topologically, residues 352-355 are periplasmic; the sequence is GAWN. The helical transmembrane segment at 356 to 376 threads the bilayer; it reads MLIGILIACSIVSLLLIMFVA. Residues 377 to 391 are Cytoplasmic-facing; the sequence is PGRPVAAHEEIHHHA.

It belongs to the major facilitator superfamily. DHA1 family. MdtL (TC 2.A.1.2.22) subfamily.

The protein resides in the cell inner membrane. Its function is as follows. Confers resistance to chloramphenicol. This chain is Multidrug resistance protein MdtL, found in Escherichia coli O6:K15:H31 (strain 536 / UPEC).